The following is a 114-amino-acid chain: Endoribonuclease MazF2 (114 aa).

It belongs to the PemK/MazF family. Probably forms a complex with cognate antitoxin MazE2.

Toxic component of a type II toxin-antitoxin (TA) system. Acts as an endoribonuclease on single-strand RNA, cleaving between the second and third bases in the sequences CUCCU and UUCCU. Neutralized by coexpression with cognate antitoxin MazE2. In Mycobacterium bovis (strain ATCC BAA-935 / AF2122/97), this protein is Endoribonuclease MazF2 (mazF2).